Reading from the N-terminus, the 424-residue chain is UPF0229 protein PFL_5654 (424 aa).

The segment at 85–108 is disordered; it reads GEHIARPQGGGGGGGGRGKAGNSG. Residues 92–108 show a composition bias toward gly residues; sequence QGGGGGGGGRGKAGNSG.

Belongs to the UPF0229 family.

The protein is UPF0229 protein PFL_5654 of Pseudomonas fluorescens (strain ATCC BAA-477 / NRRL B-23932 / Pf-5).